The sequence spans 113 residues: MIPRLLPFFASLLFAALLFPGLSNASSINHLVTEPPSFPKDEFPARGVNGSQLLHHRVKRLPPRTPPYHEPEPNYQIVNCKKSEGQCQEYCNFMETQVGYCSKKKEPCCLHPF.

A signal peptide spans 1–26 (MIPRLLPFFASLLFAALLFPGLSNAS). Intrachain disulfides connect Cys-80/Cys-108, Cys-87/Cys-101, and Cys-91/Cys-109.

Belongs to the beta-defensin family.

The protein resides in the secreted. Has antimicrobial activity against E.coli. Plays a role in the defense response in the male reproductive tract, contributing to sperm maturation, storage and protection. This is Sperm-associated antigen 11B from Mus musculus (Mouse).